The chain runs to 444 residues: Tubulin beta chain (444 aa).

The GTP site is built by glutamine 11, glutamate 69, serine 138, glycine 142, threonine 143, glycine 144, asparagine 204, and asparagine 226. Glutamate 69 contributes to the Mg(2+) binding site.

Belongs to the tubulin family. In terms of assembly, dimer of alpha and beta chains. A typical microtubule is a hollow water-filled tube with an outer diameter of 25 nm and an inner diameter of 15 nM. Alpha-beta heterodimers associate head-to-tail to form protofilaments running lengthwise along the microtubule wall with the beta-tubulin subunit facing the microtubule plus end conferring a structural polarity. Microtubules usually have 13 protofilaments but different protofilament numbers can be found in some organisms and specialized cells. Requires Mg(2+) as cofactor.

The protein localises to the cytoplasm. The protein resides in the cytoskeleton. Tubulin is the major constituent of microtubules, a cylinder consisting of laterally associated linear protofilaments composed of alpha- and beta-tubulin heterodimers. Microtubules grow by the addition of GTP-tubulin dimers to the microtubule end, where a stabilizing cap forms. Below the cap, tubulin dimers are in GDP-bound state, owing to GTPase activity of alpha-tubulin. The polypeptide is Tubulin beta chain (Phytophthora cinnamomi (Cinnamon fungus)).